Consider the following 487-residue polypeptide: Variant surface glycoprotein WRATAT B (487 aa).

Positions 1 to 19 (MWIILALLTLAGSRVAHGA) are cleaved as a signal peptide. N-linked (GlcNAc...) asparagine glycans are attached at residues Asn-71, Asn-84, Asn-418, and Asn-465. The segment at 443–468 (KPKAGTEAATTGPGERDAGATANTTG) is disordered. Residue Ser-470 is the site of GPI-anchor amidated serine attachment. A propeptide spans 471-487 (NSFVIKTSPLLFAFLLF) (removed in mature form).

It is found in the cell membrane. VSG forms a coat on the surface of the parasite. The trypanosome evades the immune response of the host by expressing a series of antigenically distinct VSGs from an estimated 1000 VSG genes. The sequence is that of Variant surface glycoprotein WRATAT B from Trypanosoma brucei rhodesiense.